We begin with the raw amino-acid sequence, 465 residues long: UDP-N-acetylmuramate--L-alanine ligase (465 aa).

114 to 120 contributes to the ATP binding site; that stretch reads GTHGKTT.

It belongs to the MurCDEF family.

It localises to the cytoplasm. The enzyme catalyses UDP-N-acetyl-alpha-D-muramate + L-alanine + ATP = UDP-N-acetyl-alpha-D-muramoyl-L-alanine + ADP + phosphate + H(+). The protein operates within cell wall biogenesis; peptidoglycan biosynthesis. Its function is as follows. Cell wall formation. In Chelativorans sp. (strain BNC1), this protein is UDP-N-acetylmuramate--L-alanine ligase.